Consider the following 884-residue polypeptide: Exocyst complex component 2 (884 aa).

The segment covering 1–11 (MEENAQARERL) has biased composition (basic and acidic residues). Residues 1-27 (MEENAQARERLPPTVTGLSPTEGVPGT) form a disordered region. One can recognise an IPT/TIG domain in the interval 13 to 98 (PTVTGLSPTE…GSSNVKFRVF (86 aa)). Coiled coils occupy residues 178–206 (ADAT…SEEM) and 846–874 (NQRL…AENL).

Belongs to the SEC5 family. In terms of assembly, the exocyst complex is composed of sec-3/exoc1, sec-5/exoc2, sec-6/exoc3, sec-8/exoc4, sec-10/exoc5, sec-15/exoc6, exo-70/exoc7 and exo-84/exoc8.

Component of the exocyst complex involved in the docking of exocytic vesicles with fusion sites on the plasma membrane. In Caenorhabditis elegans, this protein is Exocyst complex component 2 (sec-5).